The primary structure comprises 192 residues: Ion-translocating oxidoreductase complex subunit A (192 aa).

Transmembrane regions (helical) follow at residues 5-25, 39-59, 63-83, 102-122, 134-154, and 171-191; these read ILLI…FLGL, VGMG…AYLV, ILIP…VIAV, LLGI…VALL, VVYG…FAAL, and AIAL…TGLV.

This sequence belongs to the NqrDE/RnfAE family. In terms of assembly, the complex is composed of six subunits: RnfA, RnfB, RnfC, RnfD, RnfE and RnfG.

The protein resides in the cell inner membrane. Its function is as follows. Part of a membrane-bound complex that couples electron transfer with translocation of ions across the membrane. The sequence is that of Ion-translocating oxidoreductase complex subunit A from Haemophilus influenzae (strain 86-028NP).